Reading from the N-terminus, the 494-residue chain is Costunolide synthase (494 aa).

Residues 3 to 23 form a helical membrane-spanning segment; it reads PLTIVSLVVASLFLFAFWALS. Cys-432 is a binding site for heme.

It belongs to the cytochrome P450 family. The cofactor is heme.

It is found in the membrane. The catalysed reaction is germacra-1(10),4,11(13)-trien-12-oate + reduced [NADPH--hemoprotein reductase] + O2 = (+)-costunolide + oxidized [NADPH--hemoprotein reductase] + 2 H2O. Functionally, hydroxylates germacrene A acid to 6-alpha-hydroxy-germacrne A acid, a precursor of sesquiterpene lactones that spontaneously undergoes a lactonization which yields costunolide. Costunolide can then spontaneously conjugate to glutathione or cysteine. In Cichorium intybus (Chicory), this protein is Costunolide synthase (CYP71BL3).